The primary structure comprises 101 residues: Translation initiation factor IF-1, chloroplastic (101 aa).

Positions 1 to 10 (MNQLKKSFSP) are enriched in polar residues. The disordered stretch occupies residues 1–35 (MNQLKKSFSPTEGKKDQNNLINDPQKNKQKKQKKL). Residues 26 to 101 (KNKQKKQKKL…TKGRITYRHR (76 aa)) form the S1-like domain.

The protein belongs to the IF-1 family. In terms of assembly, component of the 30S ribosomal translation pre-initiation complex which assembles on the 30S ribosome in the order IF-2 and IF-3, IF-1 and N-formylmethionyl-tRNA(fMet); mRNA recruitment can occur at any time during PIC assembly.

Its subcellular location is the plastid. It localises to the chloroplast. Its function is as follows. One of the essential components for the initiation of protein synthesis. Stabilizes the binding of IF-2 and IF-3 on the 30S subunit to which N-formylmethionyl-tRNA(fMet) subsequently binds. Helps modulate mRNA selection, yielding the 30S pre-initiation complex (PIC). Upon addition of the 50S ribosomal subunit IF-1, IF-2 and IF-3 are released leaving the mature 70S translation initiation complex. The protein is Translation initiation factor IF-1, chloroplastic of Tetradesmus obliquus (Green alga).